Here is a 372-residue protein sequence, read N- to C-terminus: Anhydro-N-acetylmuramic acid kinase (372 aa).

ATP is bound at residue 14–21; it reads GTSLDGVD.

This sequence belongs to the anhydro-N-acetylmuramic acid kinase family.

It carries out the reaction 1,6-anhydro-N-acetyl-beta-muramate + ATP + H2O = N-acetyl-D-muramate 6-phosphate + ADP + H(+). The protein operates within amino-sugar metabolism; 1,6-anhydro-N-acetylmuramate degradation. It participates in cell wall biogenesis; peptidoglycan recycling. Catalyzes the specific phosphorylation of 1,6-anhydro-N-acetylmuramic acid (anhMurNAc) with the simultaneous cleavage of the 1,6-anhydro ring, generating MurNAc-6-P. Is required for the utilization of anhMurNAc either imported from the medium or derived from its own cell wall murein, and thus plays a role in cell wall recycling. This is Anhydro-N-acetylmuramic acid kinase from Photorhabdus laumondii subsp. laumondii (strain DSM 15139 / CIP 105565 / TT01) (Photorhabdus luminescens subsp. laumondii).